The sequence spans 375 residues: Succinyl-diaminopimelate desuccinylase (375 aa).

Histidine 66 is a Zn(2+) binding site. The active site involves aspartate 68. Zn(2+) is bound at residue aspartate 99. Glutamate 133 (proton acceptor) is an active-site residue. Residues glutamate 134, glutamate 162, and histidine 348 each coordinate Zn(2+).

This sequence belongs to the peptidase M20A family. DapE subfamily. In terms of assembly, homodimer. It depends on Zn(2+) as a cofactor. Co(2+) is required as a cofactor.

The enzyme catalyses N-succinyl-(2S,6S)-2,6-diaminopimelate + H2O = (2S,6S)-2,6-diaminopimelate + succinate. It participates in amino-acid biosynthesis; L-lysine biosynthesis via DAP pathway; LL-2,6-diaminopimelate from (S)-tetrahydrodipicolinate (succinylase route): step 3/3. Its function is as follows. Catalyzes the hydrolysis of N-succinyl-L,L-diaminopimelic acid (SDAP), forming succinate and LL-2,6-diaminopimelate (DAP), an intermediate involved in the bacterial biosynthesis of lysine and meso-diaminopimelic acid, an essential component of bacterial cell walls. In Methylobacillus flagellatus (strain ATCC 51484 / DSM 6875 / VKM B-1610 / KT), this protein is Succinyl-diaminopimelate desuccinylase.